Consider the following 121-residue polypeptide: Small ribosomal subunit protein uS13 (121 aa).

Positions V97–K121 are disordered. The span at Q100–K121 shows a compositional bias: basic residues.

It belongs to the universal ribosomal protein uS13 family. In terms of assembly, part of the 30S ribosomal subunit. Forms a loose heterodimer with protein S19. Forms two bridges to the 50S subunit in the 70S ribosome.

Functionally, located at the top of the head of the 30S subunit, it contacts several helices of the 16S rRNA. In the 70S ribosome it contacts the 23S rRNA (bridge B1a) and protein L5 of the 50S subunit (bridge B1b), connecting the 2 subunits; these bridges are implicated in subunit movement. Contacts the tRNAs in the A and P-sites. This Prochlorococcus marinus (strain MIT 9303) protein is Small ribosomal subunit protein uS13.